The sequence spans 682 residues: Potassium-transporting ATPase ATP-binding subunit (682 aa).

Helical transmembrane passes span 34–54 (PVMF…IAMA), 62–82 (ALFS…ANFA), 219–239 (IALT…TATL), and 254–274 (VLVA…LSAI). The 4-aspartylphosphate intermediate role is filled by Asp-307. ATP is bound by residues Asp-344, Glu-348, 377 to 384 (FTAQSRMS), and Lys-395. Mg(2+)-binding residues include Asp-518 and Asp-522. 3 helical membrane-spanning segments follow: residues 588–608 (FAII…LNIM), 616–636 (AILS…PLAL), and 656–676 (IYGL…DLLL).

This sequence belongs to the cation transport ATPase (P-type) (TC 3.A.3) family. Type IA subfamily. As to quaternary structure, the system is composed of three essential subunits: KdpA, KdpB and KdpC.

It is found in the cell inner membrane. The catalysed reaction is K(+)(out) + ATP + H2O = K(+)(in) + ADP + phosphate + H(+). Functionally, part of the high-affinity ATP-driven potassium transport (or Kdp) system, which catalyzes the hydrolysis of ATP coupled with the electrogenic transport of potassium into the cytoplasm. This subunit is responsible for energy coupling to the transport system and for the release of the potassium ions to the cytoplasm. In Escherichia coli (strain K12 / MC4100 / BW2952), this protein is Potassium-transporting ATPase ATP-binding subunit.